The primary structure comprises 460 residues: Bifunctional protein GlmU (460 aa).

Residues 1-232 (MENVAAIILA…SDEIMGVNDR (232 aa)) form a pyrophosphorylase region. UDP-N-acetyl-alpha-D-glucosamine-binding positions include 9–12 (LAAG), lysine 23, glutamine 75, and 80–81 (GT). Aspartate 105 contacts Mg(2+). The UDP-N-acetyl-alpha-D-glucosamine site is built by glycine 142, glutamate 157, asparagine 172, and asparagine 230. Asparagine 230 provides a ligand contact to Mg(2+). The linker stretch occupies residues 233–253 (AQLAQAARILRRRINRDLMLS). The interval 254–460 (GVSLVDPEQT…GWRIRMKKKT (207 aa)) is N-acetyltransferase. Arginine 336 and lysine 354 together coordinate UDP-N-acetyl-alpha-D-glucosamine. Histidine 366 serves as the catalytic Proton acceptor. UDP-N-acetyl-alpha-D-glucosamine-binding residues include tyrosine 369 and asparagine 380. Acetyl-CoA is bound by residues 389-390 (NY), serine 408, alanine 426, and arginine 443.

The protein in the N-terminal section; belongs to the N-acetylglucosamine-1-phosphate uridyltransferase family. It in the C-terminal section; belongs to the transferase hexapeptide repeat family. Homotrimer. Mg(2+) is required as a cofactor.

It is found in the cytoplasm. The catalysed reaction is alpha-D-glucosamine 1-phosphate + acetyl-CoA = N-acetyl-alpha-D-glucosamine 1-phosphate + CoA + H(+). It catalyses the reaction N-acetyl-alpha-D-glucosamine 1-phosphate + UTP + H(+) = UDP-N-acetyl-alpha-D-glucosamine + diphosphate. Its pathway is nucleotide-sugar biosynthesis; UDP-N-acetyl-alpha-D-glucosamine biosynthesis; N-acetyl-alpha-D-glucosamine 1-phosphate from alpha-D-glucosamine 6-phosphate (route II): step 2/2. The protein operates within nucleotide-sugar biosynthesis; UDP-N-acetyl-alpha-D-glucosamine biosynthesis; UDP-N-acetyl-alpha-D-glucosamine from N-acetyl-alpha-D-glucosamine 1-phosphate: step 1/1. It functions in the pathway bacterial outer membrane biogenesis; LPS lipid A biosynthesis. Functionally, catalyzes the last two sequential reactions in the de novo biosynthetic pathway for UDP-N-acetylglucosamine (UDP-GlcNAc). The C-terminal domain catalyzes the transfer of acetyl group from acetyl coenzyme A to glucosamine-1-phosphate (GlcN-1-P) to produce N-acetylglucosamine-1-phosphate (GlcNAc-1-P), which is converted into UDP-GlcNAc by the transfer of uridine 5-monophosphate (from uridine 5-triphosphate), a reaction catalyzed by the N-terminal domain. The protein is Bifunctional protein GlmU of Pelobacter propionicus (strain DSM 2379 / NBRC 103807 / OttBd1).